The primary structure comprises 321 residues: UDP-3-O-acylglucosamine N-acyltransferase (321 aa).

His231 (proton acceptor) is an active-site residue.

It belongs to the transferase hexapeptide repeat family. LpxD subfamily. As to quaternary structure, homotrimer.

It catalyses the reaction a UDP-3-O-[(3R)-3-hydroxyacyl]-alpha-D-glucosamine + a (3R)-hydroxyacyl-[ACP] = a UDP-2-N,3-O-bis[(3R)-3-hydroxyacyl]-alpha-D-glucosamine + holo-[ACP] + H(+). The protein operates within bacterial outer membrane biogenesis; LPS lipid A biosynthesis. Catalyzes the N-acylation of UDP-3-O-acylglucosamine using 3-hydroxyacyl-ACP as the acyl donor. Is involved in the biosynthesis of lipid A, a phosphorylated glycolipid that anchors the lipopolysaccharide to the outer membrane of the cell. This is UDP-3-O-acylglucosamine N-acyltransferase from Campylobacter jejuni subsp. jejuni serotype O:2 (strain ATCC 700819 / NCTC 11168).